The primary structure comprises 355 residues: Putative inositol monophosphatase 3 (355 aa).

The chain crosses the membrane as a helical span at residues 16 to 36 (VPATIFAILLTIVLVYFLNFH). Mg(2+) is bound by residues E127, D167, L169, D170, and D292. A substrate-binding site is contributed by E127. Residues 169-172 (LDAT) and D292 contribute to the substrate site.

Belongs to the inositol monophosphatase superfamily. Mg(2+) serves as cofactor.

It localises to the membrane. The catalysed reaction is a myo-inositol phosphate + H2O = myo-inositol + phosphate. Its pathway is polyol metabolism; myo-inositol biosynthesis; myo-inositol from D-glucose 6-phosphate: step 2/2. The polypeptide is Putative inositol monophosphatase 3 (Drosophila pseudoobscura pseudoobscura (Fruit fly)).